Here is a 471-residue protein sequence, read N- to C-terminus: Venom prothrombin activator vestarin-D2 (471 aa).

Residues 1–20 (MAPQLLLCLILTFLWSLPEA) form the signal peptide. Residues 21–40 (ESNVFLKSNVANRFLQRTKR) constitute a propeptide that is removed on maturation. One can recognise a Gla domain in the interval 41–86 (ANSIFEEIRPGNIERECVEEKCSKEEAREVFQDNEKTEAFWTVYVD). 4-carboxyglutamate occurs at positions 46, 47, 54, 56, 59, 60, 65, 66, 69, and 75. C57 and C62 are joined by a disulfide. An EGF-like 1; calcium-binding domain is found at 86-122 (DGDQCLSNPCHYRGTCKDGIGSYTCTCLPGYEGKNCE). Disulfide bonds link C90–C101, C95–C110, C112–C121, C129–C140, C136–C149, C151–C164, C172–C333, C233–C238, C381–C395, and C406–C434. Residue S92 is glycosylated (O-linked (Hex...) serine). The EGF-like 2 domain occupies 129 to 164 (CRLFNGNCWHFCKTVQNDTQCSCAEGYRLGVDGFSC). The propeptide at 182 to 226 (REASLPDFHFSDDYDAIDENNLVETVQSQSATLLKKSDNPSPDIR) is activation peptide. Residues 227-458 (IVSGLDCKLG…FIPWIKTIMR (232 aa)) form the Peptidase S1 domain. The active-site Charge relay system is the H268. An N-linked (GlcNAc...) asparagine glycan is attached at N271. Catalysis depends on D313, which acts as the Charge relay system. Residue S410 is the Charge relay system of the active site.

This sequence belongs to the peptidase S1 family. Snake venom subfamily. In terms of assembly, heterodimer of a light chain and a heavy chain; disulfide-linked. The vitamin K-dependent, enzymatic carboxylation of some glutamate residues allows the modified protein to bind calcium. In terms of tissue distribution, expressed by the venom gland.

It localises to the secreted. The catalysed reaction is Selective cleavage of Arg-|-Thr and then Arg-|-Ile bonds in prothrombin to form thrombin.. Functionally, snake prothrombin activator that attacks the hemostatic system of prey. This protein is functionally similar to blood coagulation factor Xa. This Demansia vestigiata (Lesser black whip snake) protein is Venom prothrombin activator vestarin-D2.